A 439-amino-acid polypeptide reads, in one-letter code: Casein kinase I homolog 3 (439 aa).

The Protein kinase domain occupies 15 to 286 (YRVGKKIGEG…LRSLFDSLLL (272 aa)). Residues 21-29 (IGEGSFGML) and Lys-44 contribute to the ATP site. Residue Asp-134 is the Proton acceptor of the active site. The interval 366–426 (DGIPGKAASP…PSKEKSRKKF (61 aa)) is disordered. The span at 372-413 (AASPQVQQQQQTSSAQQQQPQRVEQPAPQTTQPTQVDTQQAA) shows a compositional bias: low complexity.

This sequence belongs to the protein kinase superfamily. CK1 Ser/Thr protein kinase family. Casein kinase I subfamily.

The protein resides in the cytoplasm. It carries out the reaction L-seryl-[protein] + ATP = O-phospho-L-seryl-[protein] + ADP + H(+). The enzyme catalyses L-threonyl-[protein] + ATP = O-phospho-L-threonyl-[protein] + ADP + H(+). Its function is as follows. Casein kinases are operationally defined by their preferential utilization of acidic proteins such as caseins as substrates. The chain is Casein kinase I homolog 3 (cki3) from Schizosaccharomyces pombe (strain 972 / ATCC 24843) (Fission yeast).